Consider the following 1117-residue polypeptide: Cytospin-A (1117 aa).

3 disordered regions span residues 1-176 (MKKA…NQIS), 293-323 (SLSP…GSVE), and 358-390 (SSDD…NASE). Composition is skewed to low complexity over residues 45 to 72 (TTAS…TNGV) and 99 to 119 (KIST…NKES). 2 stretches are compositionally biased toward basic and acidic residues: residues 120 to 131 (SSTRERLRERTR) and 158 to 171 (TTTE…KSKS). The stretch at 168–280 (KSKSDNQISD…LNALGFSLEQ (113 aa)) forms a coiled coil. The span at 293-303 (SLSPEITPGNQ) shows a compositional bias: polar residues. Over residues 358–377 (SSDDALDAPSSSESEGIPSI) the composition is skewed to low complexity. Phosphoserine is present on residues Ser384, Ser385, and Ser389. Coiled coils occupy residues 394–449 (ACLT…MESL) and 487–807 (RYME…RGRV). The interval 852–878 (SQVPNPTAAAIPRTPLSPSPMKTPPAA) is disordered. Ser868, Ser881, and Ser887 each carry phosphoserine. Positions 920–997 (TSSTSRPASL…PTTRSRIREE (78 aa)) are disordered. The span at 946–956 (RSSEEMKRDIS) shows a compositional bias: basic and acidic residues. The span at 971–990 (TTSPQLSLSSSPTASVTPTT) shows a compositional bias: low complexity. Positions 1011 to 1116 (GSKRNALLKW…YVTAIYKYFE (106 aa)) constitute a Calponin-homology (CH) domain.

This sequence belongs to the cytospin-A family. May interact with both microtubules and actin cytoskeleton.

The protein localises to the cytoplasm. It is found in the cytoskeleton. The protein resides in the spindle. Its subcellular location is the cell junction. It localises to the gap junction. In terms of biological role, involved in cytokinesis and spindle organization. May play a role in actin cytoskeleton organization and microtubule stabilization and hence required for proper cell adhesion and migration. The polypeptide is Cytospin-A (SPECC1L) (Canis lupus familiaris (Dog)).